The primary structure comprises 274 residues: HTH-type transcriptional regulator GadX (274 aa).

Positions 145–242 constitute an HTH araC/xylS-type domain; the sequence is TRVCTVINNN…GMTPTEYQER (98 aa). 2 consecutive DNA-binding regions (H-T-H motif) follow at residues 162-183 and 209-232; these read ARIA…REEG and IKRV…RNYY.

In terms of assembly, homodimer.

In terms of biological role, positively regulates the expression of about fifteen genes involved in acid resistance such as gadA, gadB and gadC. Depending on the conditions (growth phase and medium), can repress gadW. Negatively regulates perA expression in acidic conditions and positively regulates it in alkaline conditions. The sequence is that of HTH-type transcriptional regulator GadX (gadX) from Escherichia coli O127:H6 (strain E2348/69 / EPEC).